Reading from the N-terminus, the 396-residue chain is L-lactate dehydrogenase (396 aa).

The FMN hydroxy acid dehydrogenase domain maps to 1–380; the sequence is MIISAASDYR…SRDSLVQELG (380 aa). Residue Y24 participates in substrate binding. S106 and Q127 together coordinate FMN. A substrate-binding site is contributed by Y129. T155 contributes to the FMN binding site. Position 164 (R164) interacts with substrate. FMN is bound at residue K251. H275 functions as the Proton acceptor in the catalytic mechanism. R278 is a binding site for substrate. Residue 306-330 coordinates FMN; it reads DSGIRNGLDVVRMIALGADSVLLGR.

This sequence belongs to the FMN-dependent alpha-hydroxy acid dehydrogenase family. It depends on FMN as a cofactor.

It is found in the cell inner membrane. It catalyses the reaction (S)-lactate + A = pyruvate + AH2. In terms of biological role, catalyzes the conversion of L-lactate to pyruvate. Is coupled to the respiratory chain. In Citrobacter koseri (strain ATCC BAA-895 / CDC 4225-83 / SGSC4696), this protein is L-lactate dehydrogenase.